We begin with the raw amino-acid sequence, 792 residues long: Host cell factor 2 (792 aa).

Kelch repeat units follow at residues 34–79 (LMII…GFVC), 83–130 (RILV…RLGH), 207–255 (KMYV…VIGN), and 257–303 (MYIF…VSDS). Residues 359–449 (APSQVQLIKA…QPATKETSMK (91 aa)) form the Fibronectin type-III 1 domain. The interval 399 to 447 (ASSDSSAAPNMQGVRMDPHRQGSNNIVPNSINDTINSTKTEQPATKETS) is disordered. Positions 419–445 (QGSNNIVPNSINDTINSTKTEQPATKE) are enriched in polar residues. Residue K553 forms a Glycyl lysine isopeptide (Lys-Gly) (interchain with G-Cter in SUMO2) linkage. 2 Fibronectin type-III domains span residues 583-675 (TPSN…TCIP) and 677-787 (FPGA…GNNK).

As to quaternary structure, binds KMT2A/MLL1. Component of the MLL1/MLL complex, at least composed of KMT2A/MLL1, ASH2L, RBBP5, DPY30, WDR5, MEN1, HCFC1 and HCFC2. Interacts with TASOR. As to expression, highly expressed in testis. Detected at lower levels in spleen, thymus, prostate, ovary, small intestine and colon.

It localises to the cytoplasm. It is found in the nucleus. The chain is Host cell factor 2 (HCFC2) from Homo sapiens (Human).